The chain runs to 158 residues: Putative pre-16S rRNA nuclease (158 aa).

It belongs to the YqgF nuclease family.

It is found in the cytoplasm. Functionally, could be a nuclease involved in processing of the 5'-end of pre-16S rRNA. The polypeptide is Putative pre-16S rRNA nuclease (Hahella chejuensis (strain KCTC 2396)).